We begin with the raw amino-acid sequence, 69 residues long: uncharacterized protein (69 aa).

Residues Met32 to Ile54 form a helical membrane-spanning segment.

It localises to the membrane. This is an uncharacterized protein from Sinorhizobium fredii (strain NBRC 101917 / NGR234).